We begin with the raw amino-acid sequence, 210 residues long: MSILLVTSSPRGAASHSTRIATEFAEKLLAADPSNTLVVRDLVANPLPHIDADYATGIYTPVEARTPRQAEVVGVSDVVLDELFAADTVILATGFINFNISSTLKSWVDHIARSGRSFAYGENGPKGLVTGKKVYIVLASGGIYSEGAAVQFDHAIPYLRGVLGFLGMTDVDVIRIEGVGMGPDAVTAALAKATAKVDAVVASQQAAAAA.

Residues S9 and 15 to 17 contribute to the FMN site; that span reads SHS.

This sequence belongs to the azoreductase type 1 family. Homodimer. FMN serves as cofactor.

The enzyme catalyses 2 a quinone + NADH + H(+) = 2 a 1,4-benzosemiquinone + NAD(+). It carries out the reaction N,N-dimethyl-1,4-phenylenediamine + anthranilate + 2 NAD(+) = 2-(4-dimethylaminophenyl)diazenylbenzoate + 2 NADH + 2 H(+). Functionally, quinone reductase that provides resistance to thiol-specific stress caused by electrophilic quinones. Also exhibits azoreductase activity. Catalyzes the reductive cleavage of the azo bond in aromatic azo compounds to the corresponding amines. In Mesorhizobium japonicum (strain LMG 29417 / CECT 9101 / MAFF 303099) (Mesorhizobium loti (strain MAFF 303099)), this protein is FMN-dependent NADH:quinone oxidoreductase.